We begin with the raw amino-acid sequence, 313 residues long: Ribosomal RNA small subunit methyltransferase H (313 aa).

Residues 35–37 (GGH), Asp55, Phe79, Asp100, and Gln107 contribute to the S-adenosyl-L-methionine site.

This sequence belongs to the methyltransferase superfamily. RsmH family.

The protein localises to the cytoplasm. The enzyme catalyses cytidine(1402) in 16S rRNA + S-adenosyl-L-methionine = N(4)-methylcytidine(1402) in 16S rRNA + S-adenosyl-L-homocysteine + H(+). Specifically methylates the N4 position of cytidine in position 1402 (C1402) of 16S rRNA. In Burkholderia pseudomallei (strain 1106a), this protein is Ribosomal RNA small subunit methyltransferase H.